The following is a 348-amino-acid chain: Phosphoribosylformylglycinamidine cyclo-ligase (348 aa).

The protein belongs to the AIR synthase family.

Its subcellular location is the cytoplasm. It catalyses the reaction 2-formamido-N(1)-(5-O-phospho-beta-D-ribosyl)acetamidine + ATP = 5-amino-1-(5-phospho-beta-D-ribosyl)imidazole + ADP + phosphate + H(+). Its pathway is purine metabolism; IMP biosynthesis via de novo pathway; 5-amino-1-(5-phospho-D-ribosyl)imidazole from N(2)-formyl-N(1)-(5-phospho-D-ribosyl)glycinamide: step 2/2. This is Phosphoribosylformylglycinamidine cyclo-ligase from Geotalea daltonii (strain DSM 22248 / JCM 15807 / FRC-32) (Geobacter daltonii).